The primary structure comprises 298 residues: Bifunctional protein FolD (298 aa).

NADP(+) contacts are provided by residues 166 to 168, Ser-191, and Ile-232; that span reads GRS.

This sequence belongs to the tetrahydrofolate dehydrogenase/cyclohydrolase family. In terms of assembly, homodimer.

The catalysed reaction is (6R)-5,10-methylene-5,6,7,8-tetrahydrofolate + NADP(+) = (6R)-5,10-methenyltetrahydrofolate + NADPH. The enzyme catalyses (6R)-5,10-methenyltetrahydrofolate + H2O = (6R)-10-formyltetrahydrofolate + H(+). It participates in one-carbon metabolism; tetrahydrofolate interconversion. Its function is as follows. Catalyzes the oxidation of 5,10-methylenetetrahydrofolate to 5,10-methenyltetrahydrofolate and then the hydrolysis of 5,10-methenyltetrahydrofolate to 10-formyltetrahydrofolate. In Erythrobacter litoralis (strain HTCC2594), this protein is Bifunctional protein FolD.